A 614-amino-acid chain; its full sequence is Serine/threonine-protein kinase-like protein E (614 aa).

The 390-residue stretch at 15 to 404 (YLIQLHLGQN…NPNTNGAPLS (390 aa)) folds into the Protein kinase domain. Residue 21 to 29 (LGQNSLGQQ) participates in ATP binding. The segment covering 256 to 269 (PEQTDNGVGKSSTG) has biased composition (polar residues). The interval 256-284 (PEQTDNGVGKSSTGEPPFPTVHQSPESSS) is disordered.

Belongs to the protein kinase superfamily. Ser/Thr protein kinase family.

Lacks protein kinase activity. This chain is Serine/threonine-protein kinase-like protein E (spkE), found in Synechocystis sp. (strain ATCC 27184 / PCC 6803 / Kazusa).